The sequence spans 626 residues: Solute carrier family 13 member 4 (626 aa).

Transmembrane regions (helical) follow at residues Leu13–Ser33, Ala52–Leu72, Val77–Ala97, and Val113–Leu133. Polar residues predominate over residues Ser217 to His228. Positions Ser217–Leu252 are disordered. The next 8 membrane-spanning stretches (helical) occupy residues Tyr274 to Leu294, Phe309 to Phe329, Ile372 to Thr392, Ala414 to Phe434, Ile466 to Ser486, Leu499 to Val519, Pro543 to Gly563, and Val590 to Leu610.

The protein belongs to the SLC13A/DASS transporter (TC 2.A.47) family. NADC subfamily. Highly expressed in placenta and testis with intermediate levels in brain and lower levels in heart, thymus and liver.

It localises to the membrane. It catalyses the reaction sulfate(out) + 3 Na(+)(out) = sulfate(in) + 3 Na(+)(in). With respect to regulation, transport is inhibited by thiosulfate, phosphate, molybdate, selenate and tungstate. Not inhibited by oxalate, citrate, succinate, phenol red or 4,4'-diisothiocyanostilbene-2,2'-disulfonic acid (DIDS). Functionally, sodium:sulfate symporter that mediates sulfate reabsorption in the high endothelial venules (HEV). In Homo sapiens (Human), this protein is Solute carrier family 13 member 4 (SLC13A4).